A 199-amino-acid polypeptide reads, in one-letter code: ATP-dependent Clp protease proteolytic subunit (199 aa).

A disordered region spans residues 1 to 23 (MTTSAARKGLRTRGSACPRATRS). S100 functions as the Nucleophile in the catalytic mechanism. H125 is an active-site residue.

The protein belongs to the peptidase S14 family. Fourteen ClpP subunits assemble into 2 heptameric rings which stack back to back to give a disk-like structure with a central cavity, resembling the structure of eukaryotic proteasomes.

The protein resides in the cytoplasm. The enzyme catalyses Hydrolysis of proteins to small peptides in the presence of ATP and magnesium. alpha-casein is the usual test substrate. In the absence of ATP, only oligopeptides shorter than five residues are hydrolyzed (such as succinyl-Leu-Tyr-|-NHMec, and Leu-Tyr-Leu-|-Tyr-Trp, in which cleavage of the -Tyr-|-Leu- and -Tyr-|-Trp bonds also occurs).. Functionally, cleaves peptides in various proteins in a process that requires ATP hydrolysis. Has a chymotrypsin-like activity. Plays a major role in the degradation of misfolded proteins. This Paracoccus denitrificans protein is ATP-dependent Clp protease proteolytic subunit.